Consider the following 316-residue polypeptide: Aprataxin (316 aa).

The 38-residue stretch at 1–38 (HASARGEGFLLLKADCNKGYVTVKQIGVNPTSVDLVDV) folds into the FHA-like domain. Positions 104–142 (KKMEVVDTQSSSADLRPSKSSVSPHEGTTSRKEHLGHWS) are disordered. A compositionally biased stretch (polar residues) spans 110-130 (DTQSSSADLRPSKSSVSPHEG). In terms of domain architecture, HIT spans 142–247 (SQGLKSSMQD…ISQDFDSPAL (106 aa)). Interaction with DNA substrate regions lie at residues 167–171 (DKYPK) and 229–230 (SM). The Histidine triad motif motif lies at 232-236 (QLHLH). His234 functions as the Tele-AMP-histidine intermediate in the catalytic mechanism. The C2H2-type zinc-finger motif lies at 291 to 313 (LRCHLCKQQLSTIPQLKEHLKKH).

It localises to the nucleus. The protein localises to the nucleoplasm. Its subcellular location is the nucleolus. It carries out the reaction a 5'-end adenosine-5'-diphospho-5'-2'-deoxyribonucleoside-DNA + H2O = a 5'-end 5'-phospho-2'-deoxyribonucleoside-DNA + AMP + 2 H(+). The catalysed reaction is a 5'-end adenosine-5'-diphospho-5'-ribonucleoside-2'-deoxyribonucleotide-DNA + H2O = a 5'-end 5'-phospho-ribonucleoside-2'-deoxyribonucleotide-DNA + AMP + 2 H(+). It catalyses the reaction a 3'-end 2'-deoxyribonucleotide-3'-diphospho-5'-guanosine-DNA + H2O = a 3'-end 2'-deoxyribonucleotide 3'-phosphate-DNA + GMP + 2 H(+). DNA-binding protein involved in single-strand DNA break repair, double-strand DNA break repair and base excision repair. Resolves abortive DNA ligation intermediates formed either at base excision sites, or when DNA ligases attempt to repair non-ligatable breaks induced by reactive oxygen species. Catalyzes the release of adenylate groups covalently linked to 5'-phosphate termini, resulting in the production of 5'-phosphate termini that can be efficiently rejoined. Also able to hydrolyze adenosine 5'-monophosphoramidate (AMP-NH(2)) and diadenosine tetraphosphate (AppppA), but with lower catalytic activity. Likewise, catalyzes the release of 3'-linked guanosine (DNAppG) and inosine (DNAppI) from DNA, but has higher specific activity with 5'-linked adenosine (AppDNA). The protein is Aprataxin (APTX) of Gallus gallus (Chicken).